The following is a 252-amino-acid chain: Thiazole synthase (252 aa).

Lys95 (schiff-base intermediate with DXP) is an active-site residue. 1-deoxy-D-xylulose 5-phosphate-binding positions include Gly156, Ala182–Gly183, and Asn204–Thr205.

Belongs to the ThiG family. As to quaternary structure, homotetramer. Forms heterodimers with either ThiH or ThiS.

The protein resides in the cytoplasm. It catalyses the reaction [ThiS sulfur-carrier protein]-C-terminal-Gly-aminoethanethioate + 2-iminoacetate + 1-deoxy-D-xylulose 5-phosphate = [ThiS sulfur-carrier protein]-C-terminal Gly-Gly + 2-[(2R,5Z)-2-carboxy-4-methylthiazol-5(2H)-ylidene]ethyl phosphate + 2 H2O + H(+). It participates in cofactor biosynthesis; thiamine diphosphate biosynthesis. Catalyzes the rearrangement of 1-deoxy-D-xylulose 5-phosphate (DXP) to produce the thiazole phosphate moiety of thiamine. Sulfur is provided by the thiocarboxylate moiety of the carrier protein ThiS. In vitro, sulfur can be provided by H(2)S. The protein is Thiazole synthase of Shewanella sp. (strain ANA-3).